The primary structure comprises 158 residues: Ribosome maturation factor RimP (158 aa).

The protein belongs to the RimP family.

It localises to the cytoplasm. Its function is as follows. Required for maturation of 30S ribosomal subunits. This Pseudomonas fluorescens (strain Pf0-1) protein is Ribosome maturation factor RimP.